Here is a 131-residue protein sequence, read N- to C-terminus: D-ribose pyranase (131 aa).

H20 (proton donor) is an active-site residue. Residues D28, H98, and F120–N122 contribute to the substrate site.

This sequence belongs to the RbsD / FucU family. RbsD subfamily. In terms of assembly, homodecamer.

The protein resides in the cytoplasm. It carries out the reaction beta-D-ribopyranose = beta-D-ribofuranose. It participates in carbohydrate metabolism; D-ribose degradation; D-ribose 5-phosphate from beta-D-ribopyranose: step 1/2. Its function is as follows. Catalyzes the interconversion of beta-pyran and beta-furan forms of D-ribose. The polypeptide is D-ribose pyranase (Oenococcus oeni (strain ATCC BAA-331 / PSU-1)).